A 209-amino-acid polypeptide reads, in one-letter code: dITP/XTP pyrophosphatase (209 aa).

7–12 (TGNKGK) is a binding site for substrate. Asp73 (proton acceptor) is an active-site residue. Asp73 is a binding site for Mg(2+). Residues Ser74, 155-158 (FGYD), Lys178, and 183-184 (HR) contribute to the substrate site.

It belongs to the HAM1 NTPase family. As to quaternary structure, homodimer. Mg(2+) is required as a cofactor.

It catalyses the reaction XTP + H2O = XMP + diphosphate + H(+). The catalysed reaction is dITP + H2O = dIMP + diphosphate + H(+). It carries out the reaction ITP + H2O = IMP + diphosphate + H(+). Pyrophosphatase that catalyzes the hydrolysis of nucleoside triphosphates to their monophosphate derivatives, with a high preference for the non-canonical purine nucleotides XTP (xanthosine triphosphate), dITP (deoxyinosine triphosphate) and ITP. Seems to function as a house-cleaning enzyme that removes non-canonical purine nucleotides from the nucleotide pool, thus preventing their incorporation into DNA/RNA and avoiding chromosomal lesions. The protein is dITP/XTP pyrophosphatase of Sulfurovum sp. (strain NBC37-1).